A 177-amino-acid polypeptide reads, in one-letter code: MGTAKEKKQQIVAEFKDKLSRAQTVIFSNFSGLTVEDDTILRRKFREANSEYKVYKNTLMTIAAKELGYGDDLIKYFEGPTSVAFGYDDPVAPAKVLVEFMKDHKGIELKAGLVNGKLVTVEEIKALAELPSREELVAKALGSMKAPITNLVFVLSGTLRSLLYALNAVKEKKQAEA.

It belongs to the universal ribosomal protein uL10 family. In terms of assembly, part of the ribosomal stalk of the 50S ribosomal subunit. The N-terminus interacts with L11 and the large rRNA to form the base of the stalk. The C-terminus forms an elongated spine to which L12 dimers bind in a sequential fashion forming a multimeric L10(L12)X complex.

In terms of biological role, forms part of the ribosomal stalk, playing a central role in the interaction of the ribosome with GTP-bound translation factors. The chain is Large ribosomal subunit protein uL10 from Thermoanaerobacter sp. (strain X514).